The primary structure comprises 199 residues: NAD(P)H-quinone oxidoreductase subunit 6, chloroplastic (199 aa).

Helical transmembrane passes span 13–33 (AILL…VLFT), 35–55 (IVYS…LYIL), 64–84 (VQIL…VMLI), 96–118 (WTVG…IAAI), and 157–177 (LPFE…ITMA).

The protein belongs to the complex I subunit 6 family. As to quaternary structure, NDH is composed of at least 16 different subunits, 5 of which are encoded in the nucleus.

The protein localises to the plastid. Its subcellular location is the chloroplast thylakoid membrane. The catalysed reaction is a plastoquinone + NADH + (n+1) H(+)(in) = a plastoquinol + NAD(+) + n H(+)(out). It catalyses the reaction a plastoquinone + NADPH + (n+1) H(+)(in) = a plastoquinol + NADP(+) + n H(+)(out). Functionally, NDH shuttles electrons from NAD(P)H:plastoquinone, via FMN and iron-sulfur (Fe-S) centers, to quinones in the photosynthetic chain and possibly in a chloroplast respiratory chain. The immediate electron acceptor for the enzyme in this species is believed to be plastoquinone. Couples the redox reaction to proton translocation, and thus conserves the redox energy in a proton gradient. The chain is NAD(P)H-quinone oxidoreductase subunit 6, chloroplastic (ndhG) from Huperzia lucidula (Shining clubmoss).